Here is a 447-residue protein sequence, read N- to C-terminus: Argininosuccinate synthase (447 aa).

ATP is bound by residues 17–25 (AFSGGLDTS) and Ala43. Tyr99 contributes to the L-citrulline binding site. Residues Gly129 and Thr131 each coordinate ATP. Positions 131, 135, and 136 each coordinate L-aspartate. An L-citrulline-binding site is contributed by Asn135. Asp136 contributes to the ATP binding site. Positions 139 and 192 each coordinate L-citrulline. Residue Asp194 participates in ATP binding. Residues Thr201, Glu203, and Glu280 each coordinate L-citrulline.

Belongs to the argininosuccinate synthase family. Type 2 subfamily. Homotetramer.

It is found in the cytoplasm. The catalysed reaction is L-citrulline + L-aspartate + ATP = 2-(N(omega)-L-arginino)succinate + AMP + diphosphate + H(+). It functions in the pathway amino-acid biosynthesis; L-arginine biosynthesis; L-arginine from L-ornithine and carbamoyl phosphate: step 2/3. The protein is Argininosuccinate synthase of Salmonella heidelberg (strain SL476).